We begin with the raw amino-acid sequence, 189 residues long: EFLFARTMIGVFKNIEYMCNRTSSKTWGKEAWKKIVVCIVSDGRAKINTRTRAVLAGLGVYQDGIAKQQVNGKDVTAHIYEYTTQVGLELKGTQVSLKPRSATPVQLLFCLKEKNQKKINSHRWFFQAFGRVLDPNICVLIDAGTKPGKDSIYQLWKAFDLEPMCGGACGEIKVMLDHGKKLYNPLIAT.

Belongs to the chitin synthase family.

It localises to the cell membrane. The enzyme catalyses [(1-&gt;4)-N-acetyl-beta-D-glucosaminyl](n) + UDP-N-acetyl-alpha-D-glucosamine = [(1-&gt;4)-N-acetyl-beta-D-glucosaminyl](n+1) + UDP + H(+). Functionally, polymerizes chitin, a structural polymer of the cell wall and septum, by transferring the sugar moiety of UDP-GlcNAc to the non-reducing end of the growing chitin polymer. The sequence is that of Chitin synthase 1 (CHS1) from Exophiala exophialae (Black yeast-like fungus).